Here is a 360-residue protein sequence, read N- to C-terminus: S-adenosylmethionine:tRNA ribosyltransferase-isomerase (360 aa).

This sequence belongs to the QueA family. As to quaternary structure, monomer.

The protein localises to the cytoplasm. It catalyses the reaction 7-aminomethyl-7-carbaguanosine(34) in tRNA + S-adenosyl-L-methionine = epoxyqueuosine(34) in tRNA + adenine + L-methionine + 2 H(+). Its pathway is tRNA modification; tRNA-queuosine biosynthesis. In terms of biological role, transfers and isomerizes the ribose moiety from AdoMet to the 7-aminomethyl group of 7-deazaguanine (preQ1-tRNA) to give epoxyqueuosine (oQ-tRNA). The sequence is that of S-adenosylmethionine:tRNA ribosyltransferase-isomerase from Rhodopseudomonas palustris (strain ATCC BAA-98 / CGA009).